Reading from the N-terminus, the 339-residue chain is Aspartate carbamoyltransferase catalytic subunit (339 aa).

Positions 59 and 60 each coordinate carbamoyl phosphate. Lys-87 contributes to the L-aspartate binding site. Carbamoyl phosphate is bound by residues Arg-109, His-142, and Gln-145. Positions 182 and 253 each coordinate L-aspartate. Gly-294 and Pro-295 together coordinate carbamoyl phosphate.

The protein belongs to the aspartate/ornithine carbamoyltransferase superfamily. ATCase family. Heterododecamer (2C3:3R2) of six catalytic PyrB chains organized as two trimers (C3), and six regulatory PyrI chains organized as three dimers (R2).

It carries out the reaction carbamoyl phosphate + L-aspartate = N-carbamoyl-L-aspartate + phosphate + H(+). It functions in the pathway pyrimidine metabolism; UMP biosynthesis via de novo pathway; (S)-dihydroorotate from bicarbonate: step 2/3. Its function is as follows. Catalyzes the condensation of carbamoyl phosphate and aspartate to form carbamoyl aspartate and inorganic phosphate, the committed step in the de novo pyrimidine nucleotide biosynthesis pathway. This is Aspartate carbamoyltransferase catalytic subunit from Prochlorococcus marinus (strain NATL1A).